Reading from the N-terminus, the 429-residue chain is Histidine--tRNA ligase (429 aa).

This sequence belongs to the class-II aminoacyl-tRNA synthetase family. As to quaternary structure, homodimer.

The protein localises to the cytoplasm. The catalysed reaction is tRNA(His) + L-histidine + ATP = L-histidyl-tRNA(His) + AMP + diphosphate + H(+). The chain is Histidine--tRNA ligase from Pelodictyon phaeoclathratiforme (strain DSM 5477 / BU-1).